Reading from the N-terminus, the 423-residue chain is Glutamyl-tRNA reductase 2 (423 aa).

Substrate-binding positions include 48–51 (TCYR), Ser103, 108–110 (EPQ), and Gln114. Cys49 functions as the Nucleophile in the catalytic mechanism. An NADP(+)-binding site is contributed by 183 to 188 (GAGEMA).

Belongs to the glutamyl-tRNA reductase family. As to quaternary structure, homodimer.

The enzyme catalyses (S)-4-amino-5-oxopentanoate + tRNA(Glu) + NADP(+) = L-glutamyl-tRNA(Glu) + NADPH + H(+). Its pathway is porphyrin-containing compound metabolism; protoporphyrin-IX biosynthesis; 5-aminolevulinate from L-glutamyl-tRNA(Glu): step 1/2. Its function is as follows. Catalyzes the NADPH-dependent reduction of glutamyl-tRNA(Glu) to glutamate 1-semialdehyde (GSA). The polypeptide is Glutamyl-tRNA reductase 2 (Anaeromyxobacter sp. (strain Fw109-5)).